A 640-amino-acid chain; its full sequence is tRNA uridine 5-carboxymethylaminomethyl modification enzyme MnmG (640 aa).

An FAD-binding site is contributed by 9-14; sequence GGGHAG. 289-303 serves as a coordination point for NAD(+); the sequence is GPRYCPSIEDKINKF.

This sequence belongs to the MnmG family. In terms of assembly, homodimer. Heterotetramer of two MnmE and two MnmG subunits. FAD is required as a cofactor.

Its subcellular location is the cytoplasm. In terms of biological role, NAD-binding protein involved in the addition of a carboxymethylaminomethyl (cmnm) group at the wobble position (U34) of certain tRNAs, forming tRNA-cmnm(5)s(2)U34. This chain is tRNA uridine 5-carboxymethylaminomethyl modification enzyme MnmG, found in Campylobacter hominis (strain ATCC BAA-381 / DSM 21671 / CCUG 45161 / LMG 19568 / NCTC 13146 / CH001A).